The sequence spans 1223 residues: MVLAAAMSQDAEPSGPEQPDRDARSVPGAPAPPAPPGPRGMQPPPPPPPPPPPPPQAGLPQIIQNAAKLLDKTPFSVSNPNPLLPSPASLQLAQLQAQLTLHRLKLAQTAVTNNTAAATVLNQVLSKVAMSQPLFNQLRHPSMISAPHGHTGVPPHATTVPSTRFPSNAITFSAGQTRGPGPSVNLPSQPPNTMVMHPFSGVMPQTPAQPAVILGIGKTGPAPAAAGFYEYGKATSGQAYGSETDSQPSFLPASASTSGSVTYEGHYSHSGQDSQAAFPKDFYGPTSQGSQVAGTFAADTAGGLKGEVGPLLQGPNSQWESPHGFSGQSKPDLTAAPNLWPPHPSQPYELYDPEEPTPDRTPPSLGGRLNHSKQGFSGARRRAKEEQAVLSMRPLQVQELNDFHGVAPLHLPHICSICDKKVFDLKDWELHVKGKLHAQKCLLFSENTGVRCVLGPAEGTLCASPNSTAVYNPAGNEDYASNLGTSYAALPARTFTQSNPAFPSASPGMNFVQRKLGAGRVVHICNLPEGSCTENDVINLGLPFGKVTNYILMKSTNQAFLEMAYTEAAQAMVQYYQEKSAMINGEKLLIRMSKRYKELQLKKPGKTVAAIIQDIHSQRERDMFREADRYGPERPRSRSPVSRSLSPRSHTPSFTSCSSSHSPPGPSRADWGNGRDSWEHSPYARREEERGPAPWRENGEDKRDRTDMWAHDRKHYPRQVDKTELDERLEGGRGYREKHPRSGSPSSLHSVSGYKSREDGYYRKEPKGKSDKYLKQQQEAPGRSRRKDEARLRDGRHPYPDDSGKEDGLEAKGTKSKQSEKNRTKRPDRDQEGADDRKESRMAESEAGKEEQDSMEESPSSVGRQEKETESSDAENTRTRKEQDSESGSEAEGESWYPTNMEELVTVDEVGEEEDFIMEPDIPELEEIVPIDQKDKICPEICPCVTTTLELDLAQDFTKEGVKTIGNGATEISLKSPKEPPSASTSCPSDMDVEMPGLNLDAERKPAECETGLSLEGSGCYEQQAKGAESSDVCLAPMLEQMSSPKPAEERAWQPGPFLDDGKVGGTPEDGAAEGRPLEEKASTPTETDLQSQACQGVSTQENSGYVEMKSLDARSPEYTEVELKQPLSLPSWEPEDVFSELSIPLGVEFVVPRTGFYCKLCGLFYTSEEMAKMSHCRSAVHYRNLQKYLSQLAEEGLKETEGAGSPRPEDSGIVPHFERKKL.

3 disordered regions span residues 1 to 59, 238 to 288, and 306 to 381; these read MVLA…QAGL, QAYG…PTSQ, and GEVG…GARR. Pro residues predominate over residues 29 to 57; sequence APAPPAPPGPRGMQPPPPPPPPPPPPPQA. 2 stretches are compositionally biased toward polar residues: residues 238–261 and 314–331; these read QAYG…SGSV and GPNS…QSKP. A U1-type zinc finger spans residues 410–444; the sequence is HLPHICSICDKKVFDLKDWELHVKGKLHAQKCLLF. The RRM domain maps to 520 to 595; the sequence is RVVHICNLPE…EKLLIRMSKR (76 aa). Residues 626–636 show a composition bias toward basic and acidic residues; it reads EADRYGPERPR. Disordered regions lie at residues 626-902, 971-995, and 1042-1102; these read EADR…TNME, EISL…DVEM, and MSSP…STQE. The interval 630-657 is RS; the sequence is YGPERPRSRSPVSRSLSPRSHTPSFTSC. Phosphoserine occurs at positions 637, 639, 642, 644, 662, and 681. The segment covering 638–662 has biased composition (low complexity); the sequence is RSPVSRSLSPRSHTPSFTSCSSSHS. Basic and acidic residues-rich tracts occupy residues 676–711 and 718–737; these read DSWE…MWAH and RQVD…GYRE. The span at 742 to 752 shows a compositional bias: low complexity; that stretch reads SGSPSSLHSVS. Ser-744 bears the Phosphoserine mark. Basic and acidic residues-rich tracts occupy residues 755–774 and 786–852; these read KSRE…DKYL and RKDE…KEEQ. Residues Ser-803, Ser-861, Ser-872, Ser-887, Ser-889, Ser-973, Ser-976, and Ser-1044 each carry the phosphoserine modification. A compositionally biased stretch (basic and acidic residues) spans 864 to 884; that stretch reads RQEKETESSDAENTRTRKEQD. Positions 1083-1102 are enriched in polar residues; sequence STPTETDLQSQACQGVSTQE. 2 positions are modified to phosphoserine: Ser-1111 and Ser-1116. The segment at 1157 to 1188 adopts a Matrin-type zinc-finger fold; sequence FYCKLCGLFYTSEEMAKMSHCRSAVHYRNLQK. Positions 1197–1223 are disordered; the sequence is GLKETEGAGSPRPEDSGIVPHFERKKL. Ser-1206 carries the phosphoserine modification.

In terms of assembly, associates with components of the U1 and U2 U1 small nuclear ribonucleoprotein complexes. Phosphorylation regulates the subcellular localization. Phosphorylation of Ser-637 and Ser-639 in the RS (arginine/serine-rich) region promotes nuclear localization of the protein. In contrast, phosphorylation of the C-terminal disordered region promotes localization to cytoplasmic ribonucleoprotein granules.

It localises to the nucleus. Its subcellular location is the cytoplasm. The protein resides in the cytoplasmic ribonucleoprotein granule. RNA-binding protein that acts as a regulator of mRNA splicing of a subset of genes encoding key structural proteins involved in cardiac development, such as TTN (Titin), CACNA1C, CAMK2D or PDLIM5/ENH. Acts as a repressor of mRNA splicing: specifically binds the 5'UCUU-3' motif that is predominantly found within intronic sequences of pre-mRNAs, leading to the exclusion of specific exons in target transcripts. RBM20-mediated exon skipping is hormone-dependent and is essential for TTN isoform transition in both cardiac and skeletal muscles. RBM20-mediated exon skipping of TTN provides substrates for the formation of circular RNA (circRNAs) from the TTN transcripts. Together with RBM24, promotes the expression of short isoforms of PDLIM5/ENH in cardiomyocytes. This chain is RNA-binding protein 20, found in Sus scrofa (Pig).